A 566-amino-acid polypeptide reads, in one-letter code: Urease subunit alpha (566 aa).

The 439-residue stretch at 128–566 (GGIDTHIHWI…LPMAQRYFLF (439 aa)) folds into the Urease domain. Residues H133, H135, and K216 each contribute to the Ni(2+) site. Position 216 is an N6-carboxylysine (K216). H218 provides a ligand contact to substrate. 2 residues coordinate Ni(2+): H245 and H271. H319 functions as the Proton donor in the catalytic mechanism. A Ni(2+)-binding site is contributed by D359.

This sequence belongs to the metallo-dependent hydrolases superfamily. Urease alpha subunit family. In terms of assembly, heterotrimer of UreA (gamma), UreB (beta) and UreC (alpha) subunits. Three heterotrimers associate to form the active enzyme. The cofactor is Ni cation. Post-translationally, carboxylation allows a single lysine to coordinate two nickel ions.

It is found in the cytoplasm. The enzyme catalyses urea + 2 H2O + H(+) = hydrogencarbonate + 2 NH4(+). The protein operates within nitrogen metabolism; urea degradation; CO(2) and NH(3) from urea (urease route): step 1/1. The sequence is that of Urease subunit alpha from Acinetobacter baylyi (strain ATCC 33305 / BD413 / ADP1).